A 607-amino-acid polypeptide reads, in one-letter code: Guanine nucleotide-binding protein-like 1 (607 aa).

The span at 1–14 shows a compositional bias: basic residues; it reads MPRKKPFSVKQKKK. The disordered stretch occupies residues 1 to 81; sequence MPRKKPFSVK…GPRGYDPNRY (81 aa). Residues 15 to 26 are compositionally biased toward basic and acidic residues; sequence QLQDKRERKRGL. Phosphoserine is present on residues serine 32, serine 33, and serine 34. A phosphothreonine mark is found at threonine 48 and threonine 50. A phosphoserine mark is found at serine 51 and serine 68. A CP-type G domain is found at 178-418; it reads WRQLWRVLEM…LCDCPGLIFP (241 aa). 225–228 is a binding site for GTP; that stretch reads NKVD. Serine 324 is modified (phosphoserine). Residues 367–374 and 411–415 contribute to the GTP site; these read GFPNVGKS and DCPGL. The segment at 544–607 is disordered; it reads GRVGPAGDEE…PYALLGEGEC (64 aa). The segment covering 550–585 has biased composition (acidic residues); the sequence is GDEEEEEEEELSSSCEEEGEEDRDADEEGEGDEDTP. A phosphoserine mark is found at serine 561, serine 562, and serine 563.

It belongs to the TRAFAC class YlqF/YawG GTPase family.

In terms of biological role, possible regulatory or functional link with the histocompatibility cluster. The protein is Guanine nucleotide-binding protein-like 1 (Gnl1) of Rattus norvegicus (Rat).